A 119-amino-acid polypeptide reads, in one-letter code: DNA-binding protein MmarC7_1157 (119 aa).

Over residues 1 to 12 the composition is skewed to basic and acidic residues; it reads MNPEEIRQRRLQ. The segment at 1–37 is disordered; sequence MNPEEIRQRRLQEMQAKAQEQGAANDPEAQRQAQEQQ.

It belongs to the PDCD5 family.

The polypeptide is DNA-binding protein MmarC7_1157 (Methanococcus maripaludis (strain C7 / ATCC BAA-1331)).